A 418-amino-acid chain; its full sequence is Tyrosine--tRNA ligase (418 aa).

Position 34 (tyrosine 34) interacts with L-tyrosine. A 'HIGH' region motif is present at residues 39–48 (PTADSLHLGH). Residues tyrosine 169 and glutamine 173 each contribute to the L-tyrosine site. The 'KMSKS' region motif lies at 229 to 233 (KFGKS). ATP is bound at residue lysine 232. An S4 RNA-binding domain is found at 352-418 (NNIVELLVSS…GKKKYFVLTY (67 aa)).

The protein belongs to the class-I aminoacyl-tRNA synthetase family. TyrS type 1 subfamily. As to quaternary structure, homodimer.

The protein localises to the cytoplasm. The catalysed reaction is tRNA(Tyr) + L-tyrosine + ATP = L-tyrosyl-tRNA(Tyr) + AMP + diphosphate + H(+). Functionally, catalyzes the attachment of tyrosine to tRNA(Tyr) in a two-step reaction: tyrosine is first activated by ATP to form Tyr-AMP and then transferred to the acceptor end of tRNA(Tyr). In Streptococcus pneumoniae serotype 19F (strain G54), this protein is Tyrosine--tRNA ligase.